The following is a 116-amino-acid chain: PTS system cellobiose-specific EIIA component (116 aa).

Residues 11-109 (DDYMGVVMGI…AVEVVGQEQR (99 aa)) enclose the PTS EIIA type-3 domain. The active-site Tele-phosphohistidine intermediate is histidine 85. Histidine 85 is modified (phosphohistidine; by HPr). Position 88 (aspartate 88) interacts with Mg(2+).

Homotrimer. The cofactor is Mg(2+).

In terms of biological role, the phosphoenolpyruvate-dependent sugar phosphotransferase system (sugar PTS), a major carbohydrate active transport system, catalyzes the phosphorylation of incoming sugar substrates concomitantly with their translocation across the cell membrane. Involved in cellobiose transport with PtcB and CelB. This system can also transport lactose. This chain is PTS system cellobiose-specific EIIA component, found in Lactococcus lactis subsp. lactis (strain IL1403) (Streptococcus lactis).